The primary structure comprises 566 residues: Amino acid transporter 6-1 (566 aa).

11 helical membrane passes run 65–85 (YVLLLLYSIVVFTTGAVFYGW), 137–157 (MTFAVACLMSAGAGTLLDWLG), 158–178 (PLWTELLGQLLNLVGWLFLAF), 187–207 (YPALVFIGLGADASMLPTLCI), 216–236 (GLIITILGSAASASFGIPLVL), 250–270 (VSIGYCFFGPVLGVLVALLFM), 334–354 (FFSIRYFLIVLYFVVVSWATS), 367–387 (DVVSVIEVLLPLSFIPCILLG), 392–412 (VVGIIRVLFVMNTSGLLTYVF), 423–443 (LSACCFMVYMSLLTSQVYVYV), and 455–475 (LIGISNLTGGLLSLVSNPLYE). The N-linked (GlcNAc...) asparagine glycan is linked to Asn-476. The chain crosses the membrane as a helical span at residues 489–509 (IQIAMTALLCVQYVWIFILGF).

This sequence belongs to the SLC43A transporter (TC 2.A.1.44) family.

The protein localises to the cell membrane. The catalysed reaction is L-lysine(in) = L-lysine(out). The enzyme catalyses L-arginine(in) = L-arginine(out). It carries out the reaction L-methionine(in) = L-methionine(out). It catalyses the reaction L-leucine(in) = L-leucine(out). In terms of biological role, cationic and neutral amino acid transporter. Transports lysine with high affinity. Can transport arginine, methionine and leucine. Does not require inorganic ions, such as sodium, chloride, potassium, calcium or magnesium, for transport activity. This chain is Amino acid transporter 6-1, found in Toxoplasma gondii (strain ATCC 50611 / Me49).